A 156-amino-acid chain; its full sequence is Small ribosomal subunit protein uS7c (156 aa).

This sequence belongs to the universal ribosomal protein uS7 family. In terms of assembly, part of the 30S ribosomal subunit.

Its subcellular location is the plastid. The protein resides in the chloroplast. One of the primary rRNA binding proteins, it binds directly to 16S rRNA where it nucleates assembly of the head domain of the 30S subunit. The chain is Small ribosomal subunit protein uS7c (rps7) from Cycas revoluta (Sago palm).